The following is a 218-amino-acid chain: Stress response regulator protein 1 (218 aa).

A Response regulatory domain is found at 90–209 (RFLLVDDNSI…YRVVLDVVDN (120 aa)). Position 142 is a 4-aspartylphosphate (Asp142).

Functionally, required for stress adaptation, morphogenesis and virulence. This chain is Stress response regulator protein 1 (SRR1), found in Meyerozyma guilliermondii (strain ATCC 6260 / CBS 566 / DSM 6381 / JCM 1539 / NBRC 10279 / NRRL Y-324) (Yeast).